We begin with the raw amino-acid sequence, 741 residues long: Ethylene receptor 2 (741 aa).

3 helical membrane passes run 23-43 (ISDFFIAIAYFSIPLELIYFV), 53-73 (WVLVQFGAFIVLCGATHLINL), and 92-112 (IMTAVVSCATALMLVHIIPDL). Cu cation-binding residues include Cys-65 and His-69. The 150-residue stretch at 158–307 (DRHTILKTTL…VVADQVAVAL (150 aa)) folds into the GAF domain. One can recognise a Histidine kinase domain in the interval 350–589 (VMNHEMRTPM…TFVVKLGIPE (240 aa)). His-353 carries the phosphohistidine; by autocatalysis modification. A Response regulatory domain is found at 615-732 (KVLLLDDNGV…KMRNVLSNLL (118 aa)). Asp-663 carries the 4-aspartylphosphate modification.

It belongs to the ethylene receptor family. Homodimer; disulfide-linked. It depends on Cu cation as a cofactor. Post-translationally, activation probably requires a transfer of a phosphate group between a His in the transmitter domain and an Asp of the receiver domain.

It localises to the endoplasmic reticulum membrane. The catalysed reaction is ATP + protein L-histidine = ADP + protein N-phospho-L-histidine.. Functionally, may act early in the ethylene signal transduction pathway, possibly as an ethylene receptor, or as a regulator of the pathway. This Pelargonium hortorum (Common geranium) protein is Ethylene receptor 2 (ETR2).